We begin with the raw amino-acid sequence, 426 residues long: Serine hydroxymethyltransferase (426 aa).

(6S)-5,6,7,8-tetrahydrofolate-binding positions include Leu-121 and Gly-125 to Leu-127. N6-(pyridoxal phosphate)lysine is present on Lys-230. Position 354–356 (Ser-354–Phe-356) interacts with (6S)-5,6,7,8-tetrahydrofolate.

This sequence belongs to the SHMT family. In terms of assembly, homodimer. Pyridoxal 5'-phosphate is required as a cofactor.

It is found in the cytoplasm. The enzyme catalyses (6R)-5,10-methylene-5,6,7,8-tetrahydrofolate + glycine + H2O = (6S)-5,6,7,8-tetrahydrofolate + L-serine. The protein operates within one-carbon metabolism; tetrahydrofolate interconversion. It functions in the pathway amino-acid biosynthesis; glycine biosynthesis; glycine from L-serine: step 1/1. In terms of biological role, catalyzes the reversible interconversion of serine and glycine with tetrahydrofolate (THF) serving as the one-carbon carrier. This reaction serves as the major source of one-carbon groups required for the biosynthesis of purines, thymidylate, methionine, and other important biomolecules. Also exhibits THF-independent aldolase activity toward beta-hydroxyamino acids, producing glycine and aldehydes, via a retro-aldol mechanism. The protein is Serine hydroxymethyltransferase of Gloeobacter violaceus (strain ATCC 29082 / PCC 7421).